The chain runs to 591 residues: MKKISLPKIGIRPVIDGRRMGVRESLEEQTMNMAKATAALLTEKLRHACGAAVECVISDTCIAGMAEAAACEEKFSSQNVGLTITVTPCWCYGSETIDMDPTRPKAIWGFNGTERPGAVYLAAALAAHSQKGIPAFSIYGHDVQDADDTSIPADVEEKLLRFARAGLAVASMKGKSYLSLGGVSMGIAGSIVDHNFFESWLGMKVQAVDMTELRRRIDQKIYDEAELEMALAWADKNFRYGEDENNKQYQRNAEQSRAVLRESLLMAMCIRDMMQGNSKLTDIGRVEESLGYNAIAAGFQGQRHWTDQYPNGDTAEAILNSSFDWNGVREPFVVATENDSLNGVAMLMGHQLTGTAQVFADVRTYWSPEAIERVTGHKLDGLAEHGIIHLINSGSAALDGSCKQRDSEGNPTMKPHWEISQQEADACLAATEWCPAIHEYFRGGGYSSRFLTEGGVPFTMTRVNIIKGLGPVLQIAEGWSVELPKDVHDILNKRTNSTWPTTWFAPRLTGKGPFTDVYSVMANWGANHGVLTIGHVGADFITLASMLRIPVCMHNVEETKVYRPSAWAAHGMDIEGQDYRACQNYGPLYKR.

Residues Glu-337 and Asp-361 each act as proton acceptor in the active site. Mn(2+) contacts are provided by Glu-337, Asp-361, and His-528.

The protein belongs to the L-fucose isomerase family. Homohexamer. It depends on Mn(2+) as a cofactor.

It localises to the cytoplasm. The enzyme catalyses L-fucose = L-fuculose. It functions in the pathway carbohydrate degradation; L-fucose degradation; L-lactaldehyde and glycerone phosphate from L-fucose: step 1/3. In terms of biological role, converts the aldose L-fucose into the corresponding ketose L-fuculose. This chain is L-fucose isomerase, found in Escherichia coli O17:K52:H18 (strain UMN026 / ExPEC).